The following is an 84-amino-acid chain: MDLNAKQMTSEEFSKLIENQGVMGKSNITFVIGGSLGLSQAVIKRENYKVCFSKMTFPHQLFRIMLLEQVYRAFRIMKNEPYHK.

S-adenosyl-L-methionine-binding positions include glycine 33 and 52-57 (FSKMTF).

It belongs to the RNA methyltransferase RlmH family. As to quaternary structure, homodimer.

The protein localises to the cytoplasm. It carries out the reaction pseudouridine(1915) in 23S rRNA + S-adenosyl-L-methionine = N(3)-methylpseudouridine(1915) in 23S rRNA + S-adenosyl-L-homocysteine + H(+). In terms of biological role, specifically methylates the pseudouridine at position 1915 (m3Psi1915) in 23S rRNA. The polypeptide is Putative ribosomal RNA large subunit methyltransferase H 2 (rlmH2) (Clostridium perfringens (strain SM101 / Type A)).